The chain runs to 340 residues: N-acetyl-gamma-glutamyl-phosphate reductase (340 aa).

Cysteine 146 is an active-site residue.

This sequence belongs to the NAGSA dehydrogenase family. Type 1 subfamily.

The protein resides in the cytoplasm. It catalyses the reaction N-acetyl-L-glutamate 5-semialdehyde + phosphate + NADP(+) = N-acetyl-L-glutamyl 5-phosphate + NADPH + H(+). The protein operates within amino-acid biosynthesis; L-arginine biosynthesis; N(2)-acetyl-L-ornithine from L-glutamate: step 3/4. Its function is as follows. Catalyzes the NADPH-dependent reduction of N-acetyl-5-glutamyl phosphate to yield N-acetyl-L-glutamate 5-semialdehyde. This chain is N-acetyl-gamma-glutamyl-phosphate reductase, found in Streptococcus mutans serotype c (strain ATCC 700610 / UA159).